A 523-amino-acid chain; its full sequence is Cytoplasmic dynein 1 light intermediate chain 1 (523 aa).

The interval 1 to 25 (MAAVGRVGSFGSSPPGLASTYASGP) is disordered. 74–81 (GEDGAGKT) serves as a coordination point for ATP. 3 disordered regions span residues 200 to 219 (PGED…QEDR), 387 to 434 (PPTA…DPNM), and 457 to 523 (GSPG…GEAS). The residue at position 207 (Ser207) is a Phosphoserine. A Phosphothreonine modification is found at Thr213. Phosphoserine is present on residues Ser398 and Ser405. Residue Thr408 is modified to Phosphothreonine. 4 positions are modified to phosphoserine: Ser412, Ser419, Ser421, and Ser427. Low complexity predominate over residues 412–421 (SVSSNVASVS). Over residues 458 to 473 (SPGGPGVGGSPGGGAA) the composition is skewed to gly residues. A compositionally biased stretch (low complexity) spans 474–485 (GASPSLPPSAKK). Ser486 and Ser510 each carry phosphoserine. A compositionally biased stretch (low complexity) spans 506 to 523 (PASVSPTTPTSPTEGEAS). Residues Thr512, Thr513, and Thr515 each carry the phosphothreonine modification. Position 516 is a phosphoserine (Ser516).

It belongs to the dynein light intermediate chain family. As to quaternary structure, homodimer. The cytoplasmic dynein 1 complex consists of two catalytic heavy chains (HCs) and a number of non-catalytic subunits presented by intermediate chains (ICs), light intermediate chains (LICs) and light chains (LCs); the composition seems to vary in respect to the IC, LIC and LC composition. The heavy chain homodimer serves as a scaffold for the probable homodimeric assembly of the respective non-catalytic subunits. The ICs and LICs bind directly to the HC dimer and the LCs assemble on the IC dimer. Self-associates. Interacts with DYNC1H1; DYNC1LI1 and DYNC1LI2 bind mutually exclusive to DYNC1H1. Interacts with PCNT. Forms a complex with RAB11FIP3 and RAB11A1; the interaction between DYNC1LI1 and RAB11FIP3 is direct and induces DYNC1LI1 localization onto endosomal membrane; the complex regulates endocytic trafficking. Interacts with RUFY3. Phosphorylated during mitosis but not in interphase.

It is found in the cytoplasm. It localises to the chromosome. Its subcellular location is the centromere. The protein resides in the kinetochore. The protein localises to the cytoskeleton. It is found in the spindle pole. It localises to the recycling endosome membrane. Acts as one of several non-catalytic accessory components of the cytoplasmic dynein 1 complex that are thought to be involved in linking dynein to cargos and to adapter proteins that regulate dynein function. Cytoplasmic dynein 1 acts as a motor for the intracellular retrograde motility of vesicles and organelles along microtubules. May play a role in binding dynein to membranous organelles or chromosomes. Probably involved in the microtubule-dependent transport of pericentrin. Is required for progress through the spindle assembly checkpoint. The phosphorylated form appears to be involved in the selective removal of MAD1L1 and MAD1L2 but not BUB1B from kinetochores. Forms a functional Rab11/RAB11FIP3/dynein complex onto endosomal membrane that regulates the movement of peripheral sorting endosomes (SE) along microtubule tracks toward the microtubule organizing center/centrosome, generating the endosomal recycling compartment (ERC). In Mus musculus (Mouse), this protein is Cytoplasmic dynein 1 light intermediate chain 1 (Dync1li1).